A 229-amino-acid polypeptide reads, in one-letter code: Cytidylate kinase (229 aa).

ATP is bound at residue 10–18 (GPAGSGKST).

It belongs to the cytidylate kinase family. Type 1 subfamily.

Its subcellular location is the cytoplasm. The enzyme catalyses CMP + ATP = CDP + ADP. It catalyses the reaction dCMP + ATP = dCDP + ADP. The polypeptide is Cytidylate kinase (Leptospira interrogans serogroup Icterohaemorrhagiae serovar Lai (strain 56601)).